We begin with the raw amino-acid sequence, 468 residues long: Glutamate--tRNA ligase 2 (468 aa).

The 'HIGH' region motif lies at 9–19; that stretch reads PSPTGHLHIGG. Zn(2+)-binding residues include Cys98, Cys100, Cys125, and His127. Residues 236–240 carry the 'KMSKS' region motif; the sequence is RLSKR. Position 239 (Lys239) interacts with ATP.

Belongs to the class-I aminoacyl-tRNA synthetase family. Glutamate--tRNA ligase type 1 subfamily. Monomer. The cofactor is Zn(2+).

It localises to the cytoplasm. It catalyses the reaction tRNA(Glu) + L-glutamate + ATP = L-glutamyl-tRNA(Glu) + AMP + diphosphate. In terms of biological role, catalyzes the attachment of glutamate to tRNA(Glu) in a two-step reaction: glutamate is first activated by ATP to form Glu-AMP and then transferred to the acceptor end of tRNA(Glu). The chain is Glutamate--tRNA ligase 2 from Methylococcus capsulatus (strain ATCC 33009 / NCIMB 11132 / Bath).